A 399-amino-acid chain; its full sequence is Dihydrolipoyllysine-residue succinyltransferase component of 2-oxoglutarate dehydrogenase complex (399 aa).

Positions 2 to 77 (AIDIKAPTFP…LSGELLGKLT (76 aa)) constitute a Lipoyl-binding domain. Residue K43 is modified to N6-lipoyllysine. Residues 104 to 141 (ILSPAARKIAEENAIAADSITGTGKGGRVTKEDAVAAA) enclose the Peripheral subunit-binding (PSBD) domain. Active-site residues include H370 and D374.

Belongs to the 2-oxoacid dehydrogenase family. Forms a 24-polypeptide structural core with octahedral symmetry. Part of the 2-oxoglutarate dehydrogenase (OGDH) complex composed of E1 (2-oxoglutarate dehydrogenase), E2 (dihydrolipoamide succinyltransferase) and E3 (dihydrolipoamide dehydrogenase); the complex contains multiple copies of the three enzymatic components (E1, E2 and E3). Requires (R)-lipoate as cofactor.

It catalyses the reaction N(6)-[(R)-dihydrolipoyl]-L-lysyl-[protein] + succinyl-CoA = N(6)-[(R)-S(8)-succinyldihydrolipoyl]-L-lysyl-[protein] + CoA. Its pathway is amino-acid degradation; L-lysine degradation via saccharopine pathway; glutaryl-CoA from L-lysine: step 6/6. E2 component of the 2-oxoglutarate dehydrogenase (OGDH) complex which catalyzes the second step in the conversion of 2-oxoglutarate to succinyl-CoA and CO(2). In Azotobacter vinelandii, this protein is Dihydrolipoyllysine-residue succinyltransferase component of 2-oxoglutarate dehydrogenase complex (sucB).